The sequence spans 149 residues: Large ribosomal subunit protein uL22c (149 aa).

The protein belongs to the universal ribosomal protein uL22 family. As to quaternary structure, part of the 50S ribosomal subunit.

Its subcellular location is the plastid. The protein resides in the chloroplast. Its function is as follows. This protein binds specifically to 23S rRNA. Functionally, the globular domain of the protein is located near the polypeptide exit tunnel on the outside of the subunit, while an extended beta-hairpin is found that lines the wall of the exit tunnel in the center of the 70S ribosome. This is Large ribosomal subunit protein uL22c (rpl22) from Brachypodium distachyon (Purple false brome).